A 207-amino-acid chain; its full sequence is Large ribosomal subunit protein uL4 (207 aa).

Residues 45–78 (RQGTHAVKNRSAVSGGGRKPWRQKGTGRARQGSI) form a disordered region.

The protein belongs to the universal ribosomal protein uL4 family. Part of the 50S ribosomal subunit.

In terms of biological role, one of the primary rRNA binding proteins, this protein initially binds near the 5'-end of the 23S rRNA. It is important during the early stages of 50S assembly. It makes multiple contacts with different domains of the 23S rRNA in the assembled 50S subunit and ribosome. Forms part of the polypeptide exit tunnel. This chain is Large ribosomal subunit protein uL4, found in Lacticaseibacillus paracasei (strain ATCC 334 / BCRC 17002 / CCUG 31169 / CIP 107868 / KCTC 3260 / NRRL B-441) (Lactobacillus paracasei).